The chain runs to 223 residues: Ribosomal RNA small subunit methyltransferase G (223 aa).

S-adenosyl-L-methionine is bound by residues G82, L87, 133–134 (AE), and R151.

Belongs to the methyltransferase superfamily. RNA methyltransferase RsmG family.

It localises to the cytoplasm. Specifically methylates the N7 position of guanine in position 518 of 16S rRNA. The sequence is that of Ribosomal RNA small subunit methyltransferase G from Corynebacterium glutamicum (strain R).